The chain runs to 534 residues: MTATSELDDSFHVFDTTLRDGAQREGINLTVADKLAIARHLDDFGVGFIEGGWPGANPRDTEFFARARQEIDFKHAQLVAFGSTRRAGANAAEDHQVKALLDSGAQVITLVAKSHDRHVELALRTTLDENLAMVADTVSHLKAQGRRVFVDCEHFFDGYRANPEYAKSVVRTASEAGADVVVLCDTNGGMLPAQIQAVVATVLADTGARLGIHAQDDTGCAVANTLAAVDAGATHVQCTANGYGERVGNANLFPVVAALELKYGKQVLPEGRLREMTRISHAIAEVVNLTPSTHQPYVGVSAFAHKAGLHASAIKVDPDLYQHIDPELVGNTMRMLVSDMAGRASIELKGKELGIDLGGDRELVGRVVERVKERELAGYTYEAADASFELLLRAEAEGRPLKYFEVESWRAITEDRPDGSHANEATVKLWAKGERIVATAEGNGPVNALDRSLRVALEKIYPELAKLDLVDYKVRILEGVHGTQSTTRVLISTSDGTGEWATVGVAENVIAASWQALEDAYTYGLLRAGVAPAE.

Residues F11 to R274 form the Pyruvate carboxyltransferase domain.

The protein belongs to the alpha-IPM synthase/homocitrate synthase family.

It catalyses the reaction pyruvate + acetyl-CoA + H2O = (3R)-citramalate + CoA + H(+). Its pathway is amino-acid biosynthesis; L-isoleucine biosynthesis; 2-oxobutanoate from pyruvate: step 1/3. Its function is as follows. Catalyzes the condensation of pyruvate and acetyl-coenzyme A to form (R)-citramalate. The protein is (R)-citramalate synthase of Streptomyces coelicolor (strain ATCC BAA-471 / A3(2) / M145).